The following is a 756-amino-acid chain: Catalase-peroxidase (756 aa).

A cross-link (tryptophyl-tyrosyl-methioninium (Trp-Tyr) (with M-270)) is located at residues 91 to 244 (WHSAGTYRTG…LAAVQMGLIY (154 aa)). The Proton acceptor role is filled by H92. Positions 198–230 (AQKKMQQPGDGTLVAEPENHANEESRTASGERN) are disordered. Residues 214-223 (PENHANEESR) show a composition bias toward basic and acidic residues. A cross-link (tryptophyl-tyrosyl-methioninium (Tyr-Met) (with W-91)) is located at residues 244–270 (YVNPEGPEGVPDPVASAKDIRETFGRM). H285 serves as a coordination point for heme b. The tract at residues 371–390 (KNGAGAGKIPDAHDPSKRHA) is disordered.

It belongs to the peroxidase family. Peroxidase/catalase subfamily. As to quaternary structure, homodimer or homotetramer. Heme b serves as cofactor. Formation of the three residue Trp-Tyr-Met cross-link is important for the catalase, but not the peroxidase activity of the enzyme.

The enzyme catalyses H2O2 + AH2 = A + 2 H2O. It carries out the reaction 2 H2O2 = O2 + 2 H2O. Its function is as follows. Bifunctional enzyme with both catalase and broad-spectrum peroxidase activity. The sequence is that of Catalase-peroxidase from Pseudomonas savastanoi pv. phaseolicola (strain 1448A / Race 6) (Pseudomonas syringae pv. phaseolicola (strain 1448A / Race 6)).